Here is a 267-residue protein sequence, read N- to C-terminus: Phosphate import ATP-binding protein PstB (267 aa).

The region spanning 21-262 (VAARNLDFYY…PSKQQTEDYI (242 aa)) is the ABC transporter domain. 53–60 (GPSGCGKS) provides a ligand contact to ATP.

The protein belongs to the ABC transporter superfamily. Phosphate importer (TC 3.A.1.7) family. As to quaternary structure, the complex is composed of two ATP-binding proteins (PstB), two transmembrane proteins (PstC and PstA) and a solute-binding protein (PstS).

The protein resides in the cell inner membrane. The enzyme catalyses phosphate(out) + ATP + H2O = ADP + 2 phosphate(in) + H(+). Functionally, part of the ABC transporter complex PstSACB involved in phosphate import. Responsible for energy coupling to the transport system. This chain is Phosphate import ATP-binding protein PstB, found in Xanthomonas oryzae pv. oryzae (strain MAFF 311018).